We begin with the raw amino-acid sequence, 172 residues long: Adenine phosphoribosyltransferase (172 aa).

It belongs to the purine/pyrimidine phosphoribosyltransferase family. As to quaternary structure, homodimer.

The protein resides in the cytoplasm. The enzyme catalyses AMP + diphosphate = 5-phospho-alpha-D-ribose 1-diphosphate + adenine. It participates in purine metabolism; AMP biosynthesis via salvage pathway; AMP from adenine: step 1/1. Catalyzes a salvage reaction resulting in the formation of AMP, that is energically less costly than de novo synthesis. The chain is Adenine phosphoribosyltransferase from Streptococcus agalactiae serotype III (strain NEM316).